Reading from the N-terminus, the 71-residue chain is Putative RNA-binding regulatory peptide (71 aa).

In terms of assembly, interacts with IGF2BP1 (via KH3 and KH4 domains); the interaction results in increased binding of IGF2BP1 to N6-methyladenosine (m6A)-containing mRNAs. As to expression, detected in colon (at protein level).

Functionally, enhances binding of IGF2BP1 to N6-methyladenosine (m6A)-containing mRNAs, thereby contributing to increased mRNA stability. Also increases the interaction of IGF2BP1 with RNA stabilizers ELAVL1/HUR, MATR3 and PABPC1, and increases the interaction of RNA stabilizers ELAVL1/HUR, MATR3 and PABPC1 with m6A-containing mRNAs. Contributes to MYC stability by enhancing binding of IGF2BP1 to m6A-containing MYC mRNAs and increasing recruitment of RNA stabilizing proteins to m6A-containing MYC mRNAs. The polypeptide is Putative RNA-binding regulatory peptide (Homo sapiens (Human)).